A 365-amino-acid polypeptide reads, in one-letter code: DNA replication and repair protein RecF (365 aa).

Residue 30–37 coordinates ATP; that stretch reads GRNAQGKT.

It belongs to the RecF family.

It is found in the cytoplasm. The RecF protein is involved in DNA metabolism; it is required for DNA replication and normal SOS inducibility. RecF binds preferentially to single-stranded, linear DNA. It also seems to bind ATP. The chain is DNA replication and repair protein RecF from Streptococcus pneumoniae (strain CGSP14).